The following is an 89-amino-acid chain: Elongation factor 1-beta (89 aa).

The protein belongs to the EF-1-beta/EF-1-delta family.

Its function is as follows. Promotes the exchange of GDP for GTP in EF-1-alpha/GDP, thus allowing the regeneration of EF-1-alpha/GTP that could then be used to form the ternary complex EF-1-alpha/GTP/AAtRNA. The chain is Elongation factor 1-beta from Methanococcus maripaludis (strain DSM 14266 / JCM 13030 / NBRC 101832 / S2 / LL).